The primary structure comprises 82 residues: Small ribosomal subunit protein bS16 (82 aa).

This sequence belongs to the bacterial ribosomal protein bS16 family.

This chain is Small ribosomal subunit protein bS16, found in Francisella tularensis subsp. holarctica (strain FTNF002-00 / FTA).